The following is a 436-amino-acid chain: MQILVDHSQKLRRSVTMKIASHIIEETISKKLLELAKTVVIDGFRKGKAPIHIVAKRYHNYLCQDVLYQLMHQQFIAAMLKEKINVISTPNYTYSTYQKDKDLIYQVEFEISPQVELKGIDTITVEKPLVQIKETDIDAMLTQLIKQNGSWEKTNNAAKITDRVTIDLYGTIENKRLKGSQAKNLNFTIGINNKHIIPGLENGIIGHKAGDNFNINIYLPDEYFPLELRGKLAIFTVALKKVEQYRLPHLDESFIKLLGVVDGTVEGLRNKIRKDIEVLLKNAVRNYIKEQVINYLLSVNNIDVPDIMIEQEIQIIKQKNTKHIGRIRKSALEQSRELIEAQAKRRIQITLLLIEIIKQHDIKVNTARMRAIMEEMAYLSPQKQEIINSYNSQSSMRRQISNIVLEEQAIEALLMKANVIEKKIDFADFMSKLSHS.

A PPIase FKBP-type domain is found at 161 to 248 (TDRVTIDLYG…LKKVEQYRLP (88 aa)).

It belongs to the FKBP-type PPIase family. Tig subfamily.

Its subcellular location is the cytoplasm. The catalysed reaction is [protein]-peptidylproline (omega=180) = [protein]-peptidylproline (omega=0). In terms of biological role, involved in protein export. Acts as a chaperone by maintaining the newly synthesized protein in an open conformation. Functions as a peptidyl-prolyl cis-trans isomerase. This is Trigger factor from Baumannia cicadellinicola subsp. Homalodisca coagulata.